The following is a 202-amino-acid chain: Orotate phosphoribosyltransferase (202 aa).

Position 113-121 (113-121 (EDIITTGGS)) interacts with 5-phospho-alpha-D-ribose 1-diphosphate. The orotate site is built by threonine 117 and arginine 145.

It belongs to the purine/pyrimidine phosphoribosyltransferase family. PyrE subfamily. In terms of assembly, homodimer. Mg(2+) is required as a cofactor.

It carries out the reaction orotidine 5'-phosphate + diphosphate = orotate + 5-phospho-alpha-D-ribose 1-diphosphate. The protein operates within pyrimidine metabolism; UMP biosynthesis via de novo pathway; UMP from orotate: step 1/2. Catalyzes the transfer of a ribosyl phosphate group from 5-phosphoribose 1-diphosphate to orotate, leading to the formation of orotidine monophosphate (OMP). This is Orotate phosphoribosyltransferase from Sulfurimonas denitrificans (strain ATCC 33889 / DSM 1251) (Thiomicrospira denitrificans (strain ATCC 33889 / DSM 1251)).